The chain runs to 391 residues: Coproporphyrin III ferrochelatase (391 aa).

Fe-coproporphyrin III contacts are provided by serine 79 and tyrosine 148. Histidine 211 and glutamate 305 together coordinate Fe(2+).

The protein belongs to the ferrochelatase family.

The protein resides in the cytoplasm. The enzyme catalyses Fe-coproporphyrin III + 2 H(+) = coproporphyrin III + Fe(2+). The protein operates within porphyrin-containing compound metabolism; protoheme biosynthesis. Involved in coproporphyrin-dependent heme b biosynthesis. Catalyzes the insertion of ferrous iron into coproporphyrin III to form Fe-coproporphyrin III. In Tropheryma whipplei (strain TW08/27) (Whipple's bacillus), this protein is Coproporphyrin III ferrochelatase.